A 364-amino-acid polypeptide reads, in one-letter code: Mannose-1-phosphate guanyltransferase (364 aa).

Belongs to the transferase hexapeptide repeat family.

Its subcellular location is the cytoplasm. The enzyme catalyses alpha-D-mannose 1-phosphate + GTP + H(+) = GDP-alpha-D-mannose + diphosphate. The protein operates within nucleotide-sugar biosynthesis; GDP-alpha-D-mannose biosynthesis; GDP-alpha-D-mannose from alpha-D-mannose 1-phosphate (GTP route): step 1/1. Functionally, involved in cell wall synthesis where it is required for glycosylation. Involved in cell cycle progression through cell-size checkpoint. The chain is Mannose-1-phosphate guanyltransferase (MPG1) from Cryptococcus neoformans var. neoformans serotype D (strain B-3501A) (Filobasidiella neoformans).